Reading from the N-terminus, the 342-residue chain is Glycerol-3-phosphate dehydrogenase [NAD(P)+] (342 aa).

The NADPH site is built by Trp11, Arg33, and Lys112. Sn-glycerol 3-phosphate-binding residues include Lys112, Gly147, and Ser149. NADPH is bound at residue Ala151. Residues Lys202, Asp255, Ser265, Arg266, and Asn267 each coordinate sn-glycerol 3-phosphate. Residue Lys202 is the Proton acceptor of the active site. Arg266 is an NADPH binding site. The NADPH site is built by Val290 and Glu292.

The protein belongs to the NAD-dependent glycerol-3-phosphate dehydrogenase family.

It is found in the cytoplasm. The enzyme catalyses sn-glycerol 3-phosphate + NAD(+) = dihydroxyacetone phosphate + NADH + H(+). It catalyses the reaction sn-glycerol 3-phosphate + NADP(+) = dihydroxyacetone phosphate + NADPH + H(+). Its pathway is membrane lipid metabolism; glycerophospholipid metabolism. In terms of biological role, catalyzes the reduction of the glycolytic intermediate dihydroxyacetone phosphate (DHAP) to sn-glycerol 3-phosphate (G3P), the key precursor for phospholipid synthesis. The polypeptide is Glycerol-3-phosphate dehydrogenase [NAD(P)+] (Cupriavidus metallidurans (strain ATCC 43123 / DSM 2839 / NBRC 102507 / CH34) (Ralstonia metallidurans)).